We begin with the raw amino-acid sequence, 155 residues long: Small ribosomal subunit protein uS7c (155 aa).

Belongs to the universal ribosomal protein uS7 family. As to quaternary structure, part of the 30S ribosomal subunit.

It is found in the plastid. Its subcellular location is the chloroplast. Functionally, one of the primary rRNA binding proteins, it binds directly to 16S rRNA where it nucleates assembly of the head domain of the 30S subunit. This chain is Small ribosomal subunit protein uS7c (rps7), found in Saururus cernuus (Lizard's tail).